Consider the following 725-residue polypeptide: Ribosomal RNA large subunit methyltransferase K/L (725 aa).

The THUMP domain occupies 46-157 (VAYRLCLWSR…RGQATLSLDL (112 aa)). The disordered stretch occupies residues 393–412 (TGERGERNDDGQARAPSEPA). The segment covering 395–404 (ERGERNDDGQ) has biased composition (basic and acidic residues).

The protein belongs to the methyltransferase superfamily. RlmKL family.

It is found in the cytoplasm. It catalyses the reaction guanosine(2445) in 23S rRNA + S-adenosyl-L-methionine = N(2)-methylguanosine(2445) in 23S rRNA + S-adenosyl-L-homocysteine + H(+). It carries out the reaction guanosine(2069) in 23S rRNA + S-adenosyl-L-methionine = N(2)-methylguanosine(2069) in 23S rRNA + S-adenosyl-L-homocysteine + H(+). Specifically methylates the guanine in position 2445 (m2G2445) and the guanine in position 2069 (m7G2069) of 23S rRNA. This is Ribosomal RNA large subunit methyltransferase K/L from Pseudomonas paraeruginosa (strain DSM 24068 / PA7) (Pseudomonas aeruginosa (strain PA7)).